The sequence spans 372 residues: tRNA-specific 2-thiouridylase MnmA (372 aa).

ATP contacts are provided by residues 13–20 (GMSGGVDS) and methionine 39. The interval 99 to 101 (NPD) is interaction with target base in tRNA. Cysteine 104 serves as the catalytic Nucleophile. A disulfide bridge links cysteine 104 with cysteine 200. Glycine 128 is a binding site for ATP. The tract at residues 150–152 (KDQ) is interaction with tRNA. Cysteine 200 serves as the catalytic Cysteine persulfide intermediate. The interaction with tRNA stretch occupies residues 310 to 311 (RY).

The protein belongs to the MnmA/TRMU family.

Its subcellular location is the cytoplasm. The catalysed reaction is S-sulfanyl-L-cysteinyl-[protein] + uridine(34) in tRNA + AH2 + ATP = 2-thiouridine(34) in tRNA + L-cysteinyl-[protein] + A + AMP + diphosphate + H(+). Functionally, catalyzes the 2-thiolation of uridine at the wobble position (U34) of tRNA, leading to the formation of s(2)U34. In Bacillus licheniformis (strain ATCC 14580 / DSM 13 / JCM 2505 / CCUG 7422 / NBRC 12200 / NCIMB 9375 / NCTC 10341 / NRRL NRS-1264 / Gibson 46), this protein is tRNA-specific 2-thiouridylase MnmA.